Consider the following 100-residue polypeptide: Urease subunit gamma (100 aa).

This sequence belongs to the urease gamma subunit family. Heterotrimer of UreA (gamma), UreB (beta) and UreC (alpha) subunits. Three heterotrimers associate to form the active enzyme.

It is found in the cytoplasm. The enzyme catalyses urea + 2 H2O + H(+) = hydrogencarbonate + 2 NH4(+). The protein operates within nitrogen metabolism; urea degradation; CO(2) and NH(3) from urea (urease route): step 1/1. The protein is Urease subunit gamma of Rhizobium leguminosarum bv. viciae.